The primary structure comprises 396 residues: NADH-quinone oxidoreductase subunit D 2 (396 aa).

It belongs to the complex I 49 kDa subunit family. As to quaternary structure, NDH-1 is composed of 14 different subunits. Subunits NuoB, C, D, E, F, and G constitute the peripheral sector of the complex.

The protein localises to the cell inner membrane. It carries out the reaction a quinone + NADH + 5 H(+)(in) = a quinol + NAD(+) + 4 H(+)(out). In terms of biological role, NDH-1 shuttles electrons from NADH, via FMN and iron-sulfur (Fe-S) centers, to quinones in the respiratory chain. The immediate electron acceptor for the enzyme in this species is believed to be ubiquinone. Couples the redox reaction to proton translocation (for every two electrons transferred, four hydrogen ions are translocated across the cytoplasmic membrane), and thus conserves the redox energy in a proton gradient. The protein is NADH-quinone oxidoreductase subunit D 2 of Beijerinckia indica subsp. indica (strain ATCC 9039 / DSM 1715 / NCIMB 8712).